We begin with the raw amino-acid sequence, 481 residues long: Cysteine--tRNA ligase (481 aa).

Residue Cys-43 participates in Zn(2+) binding. The 'HIGH' region motif lies at 45 to 55 (ATVQGLPHIGH). Zn(2+)-binding residues include Cys-221, His-246, and Glu-250. The 'KMSKS' region motif lies at 277–281 (KMSKS). Residue Lys-280 coordinates ATP.

It belongs to the class-I aminoacyl-tRNA synthetase family. As to quaternary structure, monomer. Zn(2+) is required as a cofactor.

It localises to the cytoplasm. The enzyme catalyses tRNA(Cys) + L-cysteine + ATP = L-cysteinyl-tRNA(Cys) + AMP + diphosphate. In Mycobacterium sp. (strain JLS), this protein is Cysteine--tRNA ligase.